The primary structure comprises 93 residues: Serine rich endogenous peptide 6 (93 aa).

A signal peptide spans 1–27 (MGTKCYSKLRYVVVLVLLLFVFPCSLS). 2 consecutive short sequence motifs (SCOOP motif) follow at residues 48–62 (GIIAGSSPSGQAPNI) and 73–87 (ISEARPSKSKKGGGR). A disordered region spans residues 52–93 (GSSPSGQAPNINNNYHGRRLMISEARPSKSKKGGGREPESPG). Polar residues predominate over residues 53–66 (SSPSGQAPNINNNY). 2 short sequence motifs (sxS motif essential for MIK2 binding) span residues 54 to 56 (SPS) and 79 to 81 (SKS).

The protein belongs to the serine rich endogenous peptide (SCOOP) phytocytokine family. In terms of assembly, interacts with MIK2 (via extracellular leucine-rich repeat domain); this interaction triggers the formation of complex between MIK2 and the BAK1/SERK3 and SERK4 coreceptors, and subsequent BAK1 activation by phosphorylation. Mostly expressed in seedlings shoots, and, to a lower extent, in roots.

It localises to the cell membrane. The protein resides in the secreted. Its subcellular location is the extracellular space. The protein localises to the apoplast. Its function is as follows. Brassicaceae-specific phytocytokine (plant endogenous peptide released into the apoplast) perceived by MIK2 in a BAK1/SERK3 and SERK4 coreceptors-dependent manner, that modulates various physiological and antimicrobial processes including growth prevention and reactive oxygen species (ROS) response regulation. Inhibits root growth. The protein is Serine rich endogenous peptide 6 of Arabidopsis thaliana (Mouse-ear cress).